We begin with the raw amino-acid sequence, 484 residues long: uncharacterized protein (484 aa).

The next 12 helical transmembrane spans lie at Leu19–Val39, Val78–Val98, Phe111–Leu131, Ile134–Leu154, Phe165–Ile185, Ile199–Gly219, Thr249–Phe269, Ile289–Leu309, Ile321–Leu341, Leu360–Leu380, Phe398–Leu418, and Leu440–Leu460.

The protein resides in the cell membrane. This is an uncharacterized protein from Mesomycoplasma hyopneumoniae (strain 232) (Mycoplasma hyopneumoniae).